The primary structure comprises 140 residues: MAQSSNSTHEPLEVLKEETVNRHRAIVSVMEELEAVDWYDQRVDASTDPELTAILAHNRDEEKEHAAMTLEWLRRNDAKWAEHLRTYLFTEGPITAIEAADTAGEGSGGDAAKGATAQGDGSLGIGSLKGEAALARPPRL.

Glu31 contacts Ca(2+). Glu32 contributes to the Fe cation binding site. Residue Glu34 coordinates Ca(2+). Residues Glu62 and His65 each coordinate Fe cation. The segment at 100-140 is disordered; it reads ADTAGEGSGGDAAKGATAQGDGSLGIGSLKGEAALARPPRL. Residues 100–140 form a targeting peptide region; that stretch reads ADTAGEGSGGDAAKGATAQGDGSLGIGSLKGEAALARPPRL.

It belongs to the ferritin-like superfamily. EncFtn family. As to quaternary structure, monomers form antiparallel dimers which assemble in a decameric ring 7 nm in diameter and 4.5 nm thick with a central channel (construct without targeting peptide). Growth in Fe(2+)-rich medium induces oligomerization, the monomer does not bind metals. The target peptide probably extends away from the ring, to allow binding to the interior of the encapsulin nanocompartment shell. Fe(2+) is required as a cofactor. The cofactor is Ca(2+).

It localises to the encapsulin nanocompartment. It catalyses the reaction 4 Fe(2+) + O2 + 4 H(+) = 4 Fe(3+) + 2 H2O. Ferroxidase activity inhibited by Zn(2+). Mutants at Glu-31, Glu-34 and Trp-38 are also inhibited by Zn(2+). In terms of biological role, cargo protein of a type 1 encapsulin nanocompartment. A ferritin-like ferroxidase that mineralizes iron inside the encapsulin nanocompartment. Converts Fe(2+) to Fe(3+) that is released to the exterior of the decameric complex for deposition in the encapsulin nanocompartment. In solution the decamer binds 10-15 iron cations; in the encapsulin nanocompartment the decamer can bind up to 48 ions, perhaps via its internal channel and on its exterior. The empty encapsulin nanocompartment sequesters about 2200 Fe ions while the cargo-loaded nanocompartment can maximally sequester about 4150 Fe ions. EncFtn retains ferroxidase activity when encapsulated. Flux in the active site di-iron metal center is thought to be controlled by the 'entry site' of the protein, which both attracts metal and controls the rate of iron oxidation. Encapsulation in the nanocompartment does not alter either function of this protein. The sequence is that of Encapsulated ferritin-like protein from Rhodospirillum rubrum (strain ATCC 11170 / ATH 1.1.1 / DSM 467 / LMG 4362 / NCIMB 8255 / S1).